Consider the following 601-residue polypeptide: Elongation factor 4 (601 aa).

The region spanning 6-188 (NRIRNFCIIA…QVVTKIAPPK (183 aa)) is the tr-type G domain. Residues 18–23 (DHGKST) and 135–138 (NKID) each bind GTP.

This sequence belongs to the TRAFAC class translation factor GTPase superfamily. Classic translation factor GTPase family. LepA subfamily.

It localises to the cell membrane. It carries out the reaction GTP + H2O = GDP + phosphate + H(+). Required for accurate and efficient protein synthesis under certain stress conditions. May act as a fidelity factor of the translation reaction, by catalyzing a one-codon backward translocation of tRNAs on improperly translocated ribosomes. Back-translocation proceeds from a post-translocation (POST) complex to a pre-translocation (PRE) complex, thus giving elongation factor G a second chance to translocate the tRNAs correctly. Binds to ribosomes in a GTP-dependent manner. This chain is Elongation factor 4, found in Desulforamulus reducens (strain ATCC BAA-1160 / DSM 100696 / MI-1) (Desulfotomaculum reducens).